A 220-amino-acid polypeptide reads, in one-letter code: DNA replication complex GINS protein SLD5 (220 aa).

It belongs to the GINS4/SLD5 family. Component of the GINS complex. Interacts with EOL1 in the nucleus.

Its subcellular location is the nucleus. In terms of biological role, the GINS complex plays an essential role in the initiation of DNA replication. Required during embryogenesis. In Arabidopsis thaliana (Mouse-ear cress), this protein is DNA replication complex GINS protein SLD5.